Consider the following 342-residue polypeptide: Tetraacyldisaccharide 4'-kinase (342 aa).

Residue 68 to 75 participates in ATP binding; sequence TVGGTGKT.

It belongs to the LpxK family.

It carries out the reaction a lipid A disaccharide + ATP = a lipid IVA + ADP + H(+). It functions in the pathway glycolipid biosynthesis; lipid IV(A) biosynthesis; lipid IV(A) from (3R)-3-hydroxytetradecanoyl-[acyl-carrier-protein] and UDP-N-acetyl-alpha-D-glucosamine: step 6/6. In terms of biological role, transfers the gamma-phosphate of ATP to the 4'-position of a tetraacyldisaccharide 1-phosphate intermediate (termed DS-1-P) to form tetraacyldisaccharide 1,4'-bis-phosphate (lipid IVA). In Burkholderia ambifaria (strain ATCC BAA-244 / DSM 16087 / CCUG 44356 / LMG 19182 / AMMD) (Burkholderia cepacia (strain AMMD)), this protein is Tetraacyldisaccharide 4'-kinase.